Here is a 169-residue protein sequence, read N- to C-terminus: Disulfide bond formation protein B 1 (169 aa).

Residues 1 to 14 (MSDNTLYLRREKRF) lie on the Cytoplasmic side of the membrane. The chain crosses the membrane as a helical span at residues 15–31 (LVLLGIICLALIGGALY). Residues 32-49 (MQVVLDEAPCPLCILQRY) are Periplasmic-facing. Cys41 and Cys44 are oxidised to a cystine. A helical membrane pass occupies residues 50-65 (ALLFIAIFAFIGAAMP). The Cytoplasmic portion of the chain corresponds to 66-72 (GRRSVTA). The helical transmembrane segment at 73–89 (FETLVTLSALGGIAAAG) threads the bilayer. Residues 90-144 (RHVWILAHPSDSCGIDVLQPIVDGLPLATLFPTGFQVSGFCTTPYPPVLGLSLAQ) are Periplasmic-facing. Cysteines 102 and 130 form a disulfide. Residues 145-163 (WALTAFVLTAVLVPACIIR) form a helical membrane-spanning segment. Residues 164–169 (NRRKPY) lie on the Cytoplasmic side of the membrane.

This sequence belongs to the DsbB family.

Its subcellular location is the cell inner membrane. Its function is as follows. Required for disulfide bond formation in some periplasmic proteins. Acts by oxidizing the DsbA protein. This Pseudomonas syringae pv. syringae (strain B728a) protein is Disulfide bond formation protein B 1.